The primary structure comprises 343 residues: Cyclin-Y-like protein 1-B (343 aa).

The segment at Met-1 to Ala-69 is disordered. Basic and acidic residues predominate over residues Ala-17–Glu-28. The 123-residue stretch at Asp-145–Asn-267 folds into the Cyclin N-terminal domain.

This sequence belongs to the cyclin family. Cyclin Y subfamily.

This chain is Cyclin-Y-like protein 1-B (ccnyl1-b), found in Xenopus laevis (African clawed frog).